We begin with the raw amino-acid sequence, 510 residues long: D-allose import ATP-binding protein AlsA (510 aa).

ABC transporter domains follow at residues 6 to 245 (ISMA…VGRE) and 260 to 509 (LAHE…ALPQ). 38 to 45 (GENGAGKS) contacts ATP.

The protein belongs to the ABC transporter superfamily. D-allose importer (TC 3.A.1.2.6) family. The complex is composed of two ATP-binding proteins (AlsA), two transmembrane proteins (AlsC) and a solute-binding protein (AlsB).

It localises to the cell inner membrane. The enzyme catalyses D-allose(out) + ATP + H2O = D-allose(in) + ADP + phosphate + H(+). Its function is as follows. Part of the ABC transporter complex AlsBAC involved in D-allose import. Probably responsible for energy coupling to the transport system. In Escherichia coli (strain K12), this protein is D-allose import ATP-binding protein AlsA (alsA).